An 853-amino-acid chain; its full sequence is Guanine nucleotide exchange protein smcr8a (853 aa).

A uDENN FLCN/SMCR8-type domain is found at 47–219; it reads TSYAKFSKDF…KETELQKMNN (173 aa). 2 disordered regions span residues 272–298 and 418–454; these read PVMD…SRKS and LKPG…SFSS. Positions 280-298 are enriched in polar residues; sequence DTNPSDSAENTVETESRKS. A cDENN FLCN/SMCR8-type domain is found at 316–753; it reads RLKTLEELCD…LISHLADHRT (438 aa). A compositionally biased stretch (low complexity) spans 421–432; that stretch reads GVESGEGPPESS. Residues 433-454 show a composition bias toward polar residues; sequence TSDITQETSEAADTETKGSFSS. The 65-residue stretch at 762 to 826 folds into the dDENN FLCN/SMCR8-type domain; that stretch reads FLHIQGMLTQ…IIQYLSELIK (65 aa).

The protein belongs to the SMCR8 family. As to quaternary structure, component of the C9orf72-SMCR8 complex. The C9orf72-SMCR8 complex associates with the ATG1/ULK1 kinase complex.

It is found in the cytoplasm. Its subcellular location is the nucleus. In terms of biological role, component of the C9orf72-SMCR8 complex, a complex that has guanine nucleotide exchange factor (GEF) activity and regulates autophagy. In the complex, C9orf72 and SMCR8 probably constitute the catalytic subunits that promote the exchange of GDP to GTP, converting inactive GDP-bound RAB8A and RAB39B into their active GTP-bound form, thereby promoting autophagosome maturation. The C9orf72-SMCR8 complex also acts as a negative regulator of autophagy initiation by interacting with the ATG1/ULK1 kinase complex and inhibiting its protein kinase activity. This chain is Guanine nucleotide exchange protein smcr8a (smcr8a), found in Danio rerio (Zebrafish).